Here is an 834-residue protein sequence, read N- to C-terminus: DNA gyrase subunit A (834 aa).

The 467-residue stretch at 34-500 (LPDIRDGLKP…ADDIRDIEDI (467 aa)) folds into the Topo IIA-type catalytic domain. Residue Tyr122 is the O-(5'-phospho-DNA)-tyrosine intermediate of the active site. Positions 527–533 (QRRGGHG) match the GyrA-box motif. Positions 810–834 (LSSNENDDEVLSGSEEECSDTVSLR) are disordered. A compositionally biased stretch (acidic residues) spans 814–828 (ENDDEVLSGSEEECS).

It belongs to the type II topoisomerase GyrA/ParC subunit family. As to quaternary structure, heterotetramer, composed of two GyrA and two GyrB chains. In the heterotetramer, GyrA contains the active site tyrosine that forms a transient covalent intermediate with DNA, while GyrB binds cofactors and catalyzes ATP hydrolysis.

It localises to the cytoplasm. The catalysed reaction is ATP-dependent breakage, passage and rejoining of double-stranded DNA.. In terms of biological role, a type II topoisomerase that negatively supercoils closed circular double-stranded (ds) DNA in an ATP-dependent manner to modulate DNA topology and maintain chromosomes in an underwound state. Negative supercoiling favors strand separation, and DNA replication, transcription, recombination and repair, all of which involve strand separation. Also able to catalyze the interconversion of other topological isomers of dsDNA rings, including catenanes and knotted rings. Type II topoisomerases break and join 2 DNA strands simultaneously in an ATP-dependent manner. This chain is DNA gyrase subunit A, found in Chlamydia pneumoniae (Chlamydophila pneumoniae).